The chain runs to 207 residues: MLNKLSRLLDEAGISLTDHQKNQLVAYVGLLDKWNKAYNLTSVRDPNEMLVRHILDSIIVAPYLQGSRFIDVGTGPGLPGIPLAIVRPESHFTLLDSLGKRVRFLRQVQHELKLDNVTPVQSRVEAFPAEPPFDGVISRAFASLNDMVSWCHHLPAANGHFYALKGLAQKDEMENLPEGYGIAEVIELHVPQLEGERHLVVIQPKSR.

Residues Gly73, Leu78, 124–125 (VE), and Arg139 contribute to the S-adenosyl-L-methionine site.

Belongs to the methyltransferase superfamily. RNA methyltransferase RsmG family.

Its subcellular location is the cytoplasm. It carries out the reaction guanosine(527) in 16S rRNA + S-adenosyl-L-methionine = N(7)-methylguanosine(527) in 16S rRNA + S-adenosyl-L-homocysteine. Functionally, specifically methylates the N7 position of guanine in position 527 of 16S rRNA. This is Ribosomal RNA small subunit methyltransferase G from Klebsiella pneumoniae (strain 342).